A 364-amino-acid chain; its full sequence is Probable protein disulfide-isomerase A6 (364 aa).

Residues 1 to 28 (MKMEMHQIWSRIALASFAFAILFVSVSA) form the signal peptide. Thioredoxin domains are found at residues 29-137 (DDVV…TEGG) and 139-256 (NVKI…EKSG). Catalysis depends on nucleophile residues Cys-58, Cys-61, Cys-177, and Cys-180. Disulfide bonds link Cys-58/Cys-61 and Cys-177/Cys-180.

It belongs to the protein disulfide isomerase family.

The protein localises to the endoplasmic reticulum lumen. The catalysed reaction is Catalyzes the rearrangement of -S-S- bonds in proteins.. This Medicago sativa (Alfalfa) protein is Probable protein disulfide-isomerase A6.